Here is a 645-residue protein sequence, read N- to C-terminus: Threonine--tRNA ligase (645 aa).

The TGS domain maps to 1–62 (MSIHITFPDG…VEDGSLEIVT (62 aa)). Positions 242–541 (DHRKLGKELD…LTEVYKGAFP (300 aa)) are catalytic. Cys336, His387, and His518 together coordinate Zn(2+).

This sequence belongs to the class-II aminoacyl-tRNA synthetase family. As to quaternary structure, homodimer. The cofactor is Zn(2+).

Its subcellular location is the cytoplasm. It catalyses the reaction tRNA(Thr) + L-threonine + ATP = L-threonyl-tRNA(Thr) + AMP + diphosphate + H(+). In terms of biological role, catalyzes the attachment of threonine to tRNA(Thr) in a two-step reaction: L-threonine is first activated by ATP to form Thr-AMP and then transferred to the acceptor end of tRNA(Thr). Also edits incorrectly charged L-seryl-tRNA(Thr). This chain is Threonine--tRNA ligase, found in Enterococcus faecalis (strain ATCC 700802 / V583).